Here is a 125-residue protein sequence, read N- to C-terminus: MHRKEPGARLEATRGAARPHKQGTKPMITRPSVSQLGEGKCPSSQHLQSLRHNKQHALTLTKARCCGECSTCFCTEEKSECQRHEETSPGSCNHQIMSASTISAFCATPRFKQLFKGTVEQMSQM.

Residues 1 to 12 (MHRKEPGARLEA) are compositionally biased toward basic and acidic residues. The tract at residues 1 to 45 (MHRKEPGARLEATRGAARPHKQGTKPMITRPSVSQLGEGKCPSSQ) is disordered.

Expressed in testes and ejaculated spermatozoa (at protein level).

Its subcellular location is the cytoplasm. The protein localises to the nucleus. It localises to the cell projection. It is found in the cilium. The protein resides in the flagellum. Functionally, may play a role in the flagellum biology. This chain is Testis-specific protein LINC02914, found in Homo sapiens (Human).